Here is a 688-residue protein sequence, read N- to C-terminus: Methionine--tRNA ligase (688 aa).

The short motif at 20–30 (PYANGSIHLGH) is the 'HIGH' region element. Zn(2+)-binding residues include Cys151, Cys154, Cys164, and Cys167. The short motif at 337 to 341 (KMSKS) is the 'KMSKS' region element. An ATP-binding site is contributed by Lys340. In terms of domain architecture, tRNA-binding spans 587–688 (TFAQVDLRIA…EGAQPGMRVM (102 aa)).

The protein belongs to the class-I aminoacyl-tRNA synthetase family. MetG type 1 subfamily. Homodimer. It depends on Zn(2+) as a cofactor.

It is found in the cytoplasm. It catalyses the reaction tRNA(Met) + L-methionine + ATP = L-methionyl-tRNA(Met) + AMP + diphosphate. In terms of biological role, is required not only for elongation of protein synthesis but also for the initiation of all mRNA translation through initiator tRNA(fMet) aminoacylation. The polypeptide is Methionine--tRNA ligase (Vibrio parahaemolyticus serotype O3:K6 (strain RIMD 2210633)).